Reading from the N-terminus, the 338-residue chain is Phosphatidylinositol:ceramide inositolphosphotransferase (338 aa).

The Cytoplasmic portion of the chain corresponds to 1–36 (MTSHVTAHDVGGNEDIGTDHVPWYKQPLPLCTQVMR). Residues 37 to 57 (FILLLLLTVMFLGVAILVANA) traverse the membrane as a helical segment. Over 58–87 (RMPDPEKVRPLPDLLLESIPKVALLENGTN) the chain is Extracellular. The helical transmembrane segment at 88–108 (VIIFLLNATTVVVGFKVFLLE) threads the bilayer. Residues 109–116 (RHMNGLPR) lie on the Cytoplasmic side of the membrane. The helical transmembrane segment at 117–137 (VTFLVGVPKIGSFLNRMAFGV) threads the bilayer. Residues 138-152 (LDSGRRPFPLKNVFP) lie on the Extracellular side of the membrane. Residues 153-173 (IMAIRFLTSYAVVMVFRAFVI) traverse the membrane as a helical segment. Residues 174-189 (MGTSYPATDNHCQNPQ) are Cytoplasmic-facing. The chain crosses the membrane as a helical span at residues 190-210 (VIEHPVLNVILTLVTLGSGAI). Topologically, residues 211–222 (HCGDLMFSGHTM) are extracellular. Residue H220 is part of the active site. A helical transmembrane segment spans residues 223–243 (ILSLAFILAWDYSPFLHPWAV). Over 244–338 (RVWVSVLLPI…TDASAALPEH (95 aa)) the chain is Cytoplasmic. Active-site residues include H264 and D268.

Belongs to the sphingomyelin synthase family.

The protein resides in the membrane. Bidirectional lipid inositolphosphotransferase capable of converting phosphatidylinositol (PI) and ceramide to inositol-phosphorylceramide (IPC) and diacylglycerol (DAG) and vice versa. Direction is dependent on the relative concentrations of DAG and ceramide as phosphoinositol acceptors. Essential for viability of the pathogenic bloodstream stage of this human protozoan parasite and, consequently, can be considered as potential drug target. This chain is Phosphatidylinositol:ceramide inositolphosphotransferase, found in Leishmania major.